A 463-amino-acid chain; its full sequence is Phosphoglucosamine mutase (463 aa).

Ser110 acts as the Phosphoserine intermediate in catalysis. Mg(2+)-binding residues include Ser110, Asp255, Asp257, and Asp259. Phosphoserine is present on Ser110.

The protein belongs to the phosphohexose mutase family. Requires Mg(2+) as cofactor. Activated by phosphorylation.

The catalysed reaction is alpha-D-glucosamine 1-phosphate = D-glucosamine 6-phosphate. Catalyzes the conversion of glucosamine-6-phosphate to glucosamine-1-phosphate. This is Phosphoglucosamine mutase from Koribacter versatilis (strain Ellin345).